The sequence spans 493 residues: MNKQASQPRAIYYVVALQIWEYFSFYGMRALLILYLTNQLKYDDNHAYELFSAYCSLVYVTPILGGYLADKVLGNRMAVMLGAFLMAIGHLVLGASEIAPTFLYLSLAIIVCGYGLFKSNISCLLGELYQPEDPRRDGGFSLLYAAGNIGSIVAPIACGYVQEEYSWAMGFALAAIGMLAGLVIFLCGNRHFTHTTGVNKAVLCARSYLLPNWGWLLILLVAAPLLITVLFWKEWSVYALIVATAISLVVLAKIYRQAQTAKQRKELGLIVTLTLFSMLFWAFAQQGGSSISLYIDRFVNRDILGYSVPTAMFQSVNAFAVMLCGVVLAWLVKESVSGNRTVRIWGKFALGLGLMSAGFCILTLSARWSAAYGHSSMPLMVLGLAVMGFAELFIDPVAMSQITRIDIPGVTGVLTGIYMLLSGAIANYLAGVIADQTSQSAFDASGAVNYAINAYVDVFEQITWGALACVGVVLLIWLYQSFKFKSRALAVES.

The next 13 helical transmembrane spans lie at 14–34 (VVAL…LLIL), 49–69 (ELFS…GYLA), 91–111 (LVLG…AIIV), 138–158 (GGFS…PIAC), 167–187 (WAMG…IFLC), 212–232 (NWGW…VLFW), 235–255 (WSVY…AKIY), 267–287 (LGLI…AQQG), 312–332 (MFQS…AWLV), 344–364 (IWGK…ILTL), 379–399 (LMVL…PVAM), 413–433 (VLTG…AGVI), and 458–478 (VFEQ…LIWL).

This sequence belongs to the major facilitator superfamily. Proton-dependent oligopeptide transporter (POT/PTR) (TC 2.A.17) family. DtpD subfamily.

Its subcellular location is the cell inner membrane. In terms of biological role, probable proton-dependent permease that transports dipeptides. The protein is Dipeptide permease D of Salmonella choleraesuis (strain SC-B67).